A 109-amino-acid polypeptide reads, in one-letter code: Small ribosomal subunit protein eS25 (109 aa).

Positions Met-1–Ala-13 are enriched in basic and acidic residues. The disordered stretch occupies residues Met-1–Glu-34.

Belongs to the eukaryotic ribosomal protein eS25 family.

In Encephalitozoon cuniculi (strain GB-M1) (Microsporidian parasite), this protein is Small ribosomal subunit protein eS25 (RPS25-1).